The primary structure comprises 172 residues: NAD(P)H-quinone oxidoreductase subunit I, chloroplastic (172 aa).

4Fe-4S ferredoxin-type domains follow at residues 55 to 84 (GRIH…VDWK) and 95 to 124 (LNYS…MTEE). [4Fe-4S] cluster is bound by residues Cys64, Cys67, Cys70, Cys74, Cys104, Cys107, Cys110, and Cys114.

The protein belongs to the complex I 23 kDa subunit family. NDH is composed of at least 16 different subunits, 5 of which are encoded in the nucleus. [4Fe-4S] cluster is required as a cofactor.

The protein resides in the plastid. The protein localises to the chloroplast thylakoid membrane. The enzyme catalyses a plastoquinone + NADH + (n+1) H(+)(in) = a plastoquinol + NAD(+) + n H(+)(out). The catalysed reaction is a plastoquinone + NADPH + (n+1) H(+)(in) = a plastoquinol + NADP(+) + n H(+)(out). NDH shuttles electrons from NAD(P)H:plastoquinone, via FMN and iron-sulfur (Fe-S) centers, to quinones in the photosynthetic chain and possibly in a chloroplast respiratory chain. The immediate electron acceptor for the enzyme in this species is believed to be plastoquinone. Couples the redox reaction to proton translocation, and thus conserves the redox energy in a proton gradient. The polypeptide is NAD(P)H-quinone oxidoreductase subunit I, chloroplastic (Olimarabidopsis pumila (Dwarf rocket)).